Reading from the N-terminus, the 82-residue chain is Small ribosomal subunit protein bS16 (82 aa).

This sequence belongs to the bacterial ribosomal protein bS16 family.

The chain is Small ribosomal subunit protein bS16 from Tolumonas auensis (strain DSM 9187 / NBRC 110442 / TA 4).